We begin with the raw amino-acid sequence, 306 residues long: UDP-3-O-acyl-N-acetylglucosamine deacetylase (306 aa).

His79, His238, and Asp242 together coordinate Zn(2+). His265 functions as the Proton donor in the catalytic mechanism.

This sequence belongs to the LpxC family. Requires Zn(2+) as cofactor.

It catalyses the reaction a UDP-3-O-[(3R)-3-hydroxyacyl]-N-acetyl-alpha-D-glucosamine + H2O = a UDP-3-O-[(3R)-3-hydroxyacyl]-alpha-D-glucosamine + acetate. It functions in the pathway glycolipid biosynthesis; lipid IV(A) biosynthesis; lipid IV(A) from (3R)-3-hydroxytetradecanoyl-[acyl-carrier-protein] and UDP-N-acetyl-alpha-D-glucosamine: step 2/6. Functionally, catalyzes the hydrolysis of UDP-3-O-myristoyl-N-acetylglucosamine to form UDP-3-O-myristoylglucosamine and acetate, the committed step in lipid A biosynthesis. This Shewanella sp. (strain W3-18-1) protein is UDP-3-O-acyl-N-acetylglucosamine deacetylase.